The chain runs to 342 residues: Phosphate acyltransferase (342 aa).

This sequence belongs to the PlsX family. As to quaternary structure, homodimer. Probably interacts with PlsY.

It is found in the cytoplasm. It catalyses the reaction a fatty acyl-[ACP] + phosphate = an acyl phosphate + holo-[ACP]. The protein operates within lipid metabolism; phospholipid metabolism. Catalyzes the reversible formation of acyl-phosphate (acyl-PO(4)) from acyl-[acyl-carrier-protein] (acyl-ACP). This enzyme utilizes acyl-ACP as fatty acyl donor, but not acyl-CoA. The protein is Phosphate acyltransferase of Pelotomaculum thermopropionicum (strain DSM 13744 / JCM 10971 / SI).